Reading from the N-terminus, the 434-residue chain is Trigger factor (434 aa).

The PPIase FKBP-type domain maps to 161 to 246 (GKRVSIDFVG…VNKVEARELP (86 aa)).

The protein belongs to the FKBP-type PPIase family. Tig subfamily.

It is found in the cytoplasm. The catalysed reaction is [protein]-peptidylproline (omega=180) = [protein]-peptidylproline (omega=0). Its function is as follows. Involved in protein export. Acts as a chaperone by maintaining the newly synthesized protein in an open conformation. Functions as a peptidyl-prolyl cis-trans isomerase. This is Trigger factor from Vibrio parahaemolyticus serotype O3:K6 (strain RIMD 2210633).